A 227-amino-acid chain; its full sequence is ATP-dependent dethiobiotin synthetase BioD (227 aa).

13–18 (DIGKTY) provides a ligand contact to ATP. Thr-17 contributes to the Mg(2+) binding site. The active site involves Lys-38. Position 42 (Ser-42) interacts with substrate. ATP-binding positions include Asp-55, 116–119 (EGSG), and 179–180 (NN). Asp-55 and Glu-116 together coordinate Mg(2+).

The protein belongs to the dethiobiotin synthetase family. Homodimer. It depends on Mg(2+) as a cofactor.

It is found in the cytoplasm. It carries out the reaction (7R,8S)-7,8-diammoniononanoate + CO2 + ATP = (4R,5S)-dethiobiotin + ADP + phosphate + 3 H(+). It participates in cofactor biosynthesis; biotin biosynthesis; biotin from 7,8-diaminononanoate: step 1/2. Catalyzes a mechanistically unusual reaction, the ATP-dependent insertion of CO2 between the N7 and N8 nitrogen atoms of 7,8-diaminopelargonic acid (DAPA, also called 7,8-diammoniononanoate) to form a ureido ring. The polypeptide is ATP-dependent dethiobiotin synthetase BioD (Clostridium botulinum (strain 657 / Type Ba4)).